The following is a 361-amino-acid chain: Collagenase (361 aa).

The protein belongs to the peptidase U32 family. In terms of assembly, homodimer. A metal cation is required as a cofactor.

Its activity is regulated as follows. Activity somewhat enhanced by calcium ions, inhibited by zinc and Fe(3+) ions and by p-chloromercuribenzoic acid and EDTA. Activity is enhanced by salivary peptide cystatin and reduced by salivary peptide histatin. In terms of biological role, has collagenase activity. Active on soluble collagen, reconstituted type I collagen, heat denatured type I collagen and azocoll, but not gelatin or the synthetic bacterial collagenase substrate PZ-PLGPA. May play a role in virulence. In Porphyromonas gingivalis (Bacteroides gingivalis), this protein is Collagenase.